Consider the following 411-residue polypeptide: Putative competence-damage inducible protein (411 aa).

The protein belongs to the CinA family.

In Alkaliphilus metalliredigens (strain QYMF), this protein is Putative competence-damage inducible protein.